A 146-amino-acid chain; its full sequence is Hemoglobin subunit beta (146 aa).

Val-1 carries the N-acetylvaline modification. One can recognise a Globin domain in the interval 2–146; the sequence is HLSADEKNAL…VANALAHKYH (145 aa). Ser-44 carries the phosphoserine modification. Lys-59 is modified (N6-acetyllysine). His-63 provides a ligand contact to heme b. Lys-82 is subject to N6-acetyllysine. His-92 contacts heme b. Cys-93 is subject to S-nitrosocysteine. Lys-144 carries the N6-acetyllysine modification.

It belongs to the globin family. As to quaternary structure, heterotetramer of two alpha chains and two beta chains. Red blood cells.

In terms of biological role, involved in oxygen transport from the lung to the various peripheral tissues. The chain is Hemoglobin subunit beta from Sciurus carolinensis (Eastern gray squirrel).